A 374-amino-acid chain; its full sequence is Putative heme chaperone HemW-like protein (374 aa).

The 231-residue stretch at 1 to 231 (MKLLGLYINI…EKLLKKSGYK (231 aa)) folds into the Radical SAM core domain.

It belongs to the anaerobic coproporphyrinogen-III oxidase family. HemW subfamily.

The protein localises to the cytoplasm. Might be a heme chaperone; in E.coli heme binds independently of binding to [4Fe-4S] or S-adenosyl-L-methionine. The polypeptide is Putative heme chaperone HemW-like protein (Buchnera aphidicola subsp. Baizongia pistaciae (strain Bp)).